Here is a 151-residue protein sequence, read N- to C-terminus: C-C motif chemokine 25 (151 aa).

Residues 1–22 (MNLWLLVCLVASLMGAWSTVHT) form the signal peptide. 2 disulfides stabilise this stretch: Cys29-Cys57 and Cys30-Cys73. The segment at 94-151 (THSKQHLGSRRNLQDSHLGGQRSNTGMSRLAHSKSKSSRSTRSNKKKTSFLNMANPGP) is disordered. Positions 124–141 (AHSKSKSSRSTRSNKKKT) are enriched in basic residues.

The protein belongs to the intercrine beta (chemokine CC) family.

Its subcellular location is the secreted. Its function is as follows. Potentially involved in T-cell development. Recombinant protein shows chemotactic activity on thymocytes, macrophages, THP-1 cells, and dendritics cells but is inactive on peripheral blood lymphocytes and neutrophils. Binds to CCR9. Binds to atypical chemokine receptor ACKR4 and mediates the recruitment of beta-arrestin (ARRB1/2) to ACKR4. This is C-C motif chemokine 25 (CCL25) from Canis lupus familiaris (Dog).